A 317-amino-acid polypeptide reads, in one-letter code: Probable cell division protein WhiA (317 aa).

Positions 281-314 (TLKELGEMINPPIGKSGVNHRLRKLDQIADRERG) form a DNA-binding region, H-T-H motif.

Belongs to the WhiA family.

In terms of biological role, involved in cell division and chromosome segregation. The chain is Probable cell division protein WhiA from Alkaliphilus metalliredigens (strain QYMF).